The primary structure comprises 1139 residues: DNA-directed RNA polymerase subunit beta (1139 aa).

The interval 1085–1139 is disordered; the sequence is ADTSNRHTPSRPTYESVTSEDLSPSPAFTRVLRTADANASRSLEEDEDEEEEEDF. Residues 1086 to 1106 show a composition bias toward polar residues; that stretch reads DTSNRHTPSRPTYESVTSEDL. A compositionally biased stretch (acidic residues) spans 1128-1139; the sequence is EEDEDEEEEEDF.

Belongs to the RNA polymerase beta chain family. In cyanobacteria the RNAP catalytic core is composed of 2 alpha, 1 beta, 1 beta', 1 gamma and 1 omega subunit. When a sigma factor is associated with the core the holoenzyme is formed, which can initiate transcription.

It catalyses the reaction RNA(n) + a ribonucleoside 5'-triphosphate = RNA(n+1) + diphosphate. Its function is as follows. DNA-dependent RNA polymerase catalyzes the transcription of DNA into RNA using the four ribonucleoside triphosphates as substrates. The polypeptide is DNA-directed RNA polymerase subunit beta (Synechococcus sp. (strain JA-2-3B'a(2-13)) (Cyanobacteria bacterium Yellowstone B-Prime)).